A 554-amino-acid chain; its full sequence is Glutamine--tRNA ligase (554 aa).

Positions 34-44 match the 'HIGH' region motif; sequence PEPNGYLHIGH. ATP contacts are provided by residues 35 to 37 and 41 to 47; these read EPN and HIGHAKS. L-glutamine contacts are provided by aspartate 67 and tyrosine 212. ATP contacts are provided by residues threonine 231, 261-262, and 269-271; these read RL and MSK. The 'KMSKS' region signature appears at 268 to 272; the sequence is VMSKR. Positions 317-324 are interaction with tRNA; the sequence is TKQDNTIE.

It belongs to the class-I aminoacyl-tRNA synthetase family. In terms of assembly, monomer.

It localises to the cytoplasm. The catalysed reaction is tRNA(Gln) + L-glutamine + ATP = L-glutaminyl-tRNA(Gln) + AMP + diphosphate. The chain is Glutamine--tRNA ligase from Escherichia coli (strain 55989 / EAEC).